We begin with the raw amino-acid sequence, 314 residues long: A-kinase anchor protein 7 isoform gamma (314 aa).

A disordered region spans residues 1–46 (MPFAAVDIQDDCGSPDVPQANPKRSKEEEEDRGDKNDHVKKRKKAK). Basic and acidic residues predominate over residues 24–37 (RSKEEEEDRGDKND). AMP contacts are provided by residues Thr95 and 185–187 (HLT). CMP-binding positions include Thr95 and 185 to 187 (HLT). The segment at 260 to 314 (AELVRLSKRLVENAVLKAVQQYLEETQNKKQPGEGNSTKAEEGDRNGDGSDNNRK) is PKA-RII-alpha subunit binding domain. Residues 261 to 285 (ELVRLSKRLVENAVLKAVQQYLEET) are RI-alpha-binding. The RII-binding stretch occupies residues 262 to 275 (LVRLSKRLVENAVL). The segment at 281–314 (YLEETQNKKQPGEGNSTKAEEGDRNGDGSDNNRK) is disordered. Residues 298-314 (KAEEGDRNGDGSDNNRK) are compositionally biased toward basic and acidic residues.

As to quaternary structure, binds cAMP-dependent protein kinase (PKA). Interacts with PRKCA; only the cytoplasmic form is capable of interacting with PRKCA. Expressed in oocytes.

It localises to the nucleus. Its subcellular location is the cytoplasm. Probably targets cAMP-dependent protein kinase (PKA) to the cellular membrane or cytoskeletal structures. The membrane-associated form reduces epithelial sodium channel (ENaC) activity, whereas the free cytoplasmic form may negatively regulate ENaC channel feedback inhibition by intracellular sodium. This is A-kinase anchor protein 7 isoform gamma from Mus musculus (Mouse).